Reading from the N-terminus, the 673-residue chain is Protein transport Sec1a (673 aa).

The segment at 538-591 (SSHKEESEARTGSVRKSSAPTAVPERKATPHSMRSRRTATWARPHSSDDGYSSD) is disordered.

It belongs to the STXBP/unc-18/SEC1 family. In terms of assembly, does not bind the syntaxin KNOLLE.

Involved in the vesicle trafficking. Binds syntaxins. The sequence is that of Protein transport Sec1a (SEC1A) from Arabidopsis thaliana (Mouse-ear cress).